Consider the following 317-residue polypeptide: Melanocyte-stimulating hormone receptor (317 aa).

The Extracellular portion of the chain corresponds to 1 to 37; that stretch reads MPVQGSQRRLLGSLNSTPTATPRLGLAANQTGARCLE. Asn-29 carries an N-linked (GlcNAc...) asparagine glycan. A helical transmembrane segment spans residues 38-63; that stretch reads VSIPDGLFLSLGLVSLVENVLVVVAI. The Cytoplasmic portion of the chain corresponds to 64-72; that stretch reads ARNRNLHSP. A helical membrane pass occupies residues 73–93; sequence MYCFICCLALSDLLVSGSNML. The Extracellular segment spans residues 94 to 118; that stretch reads DTAVILLLEAGALAARAAVVQQLDN. A helical transmembrane segment spans residues 119 to 140; the sequence is VIDVITCSSMLSSLCFLGAIAV. The Cytoplasmic segment spans residues 141 to 163; it reads DRYISIFYALRYHSIVTLRRARR. A helical membrane pass occupies residues 164–183; that stretch reads VVAAIWVASILFSTLFIAYC. The Extracellular portion of the chain corresponds to 184–191; that stretch reads DHAAVLLC. A helical transmembrane segment spans residues 192 to 211; that stretch reads LVVFFLAMLVLMAVLYVHML. Topologically, residues 212–240 are cytoplasmic; sequence ARACQHAQGIAQLHKRQRPAHQGVGLKGA. Residues 241-266 traverse the membrane as a helical segment; that stretch reads ATLTILLGIFFLCWGPFFLHLTLIVL. Topologically, residues 267–279 are extracellular; sequence CPQHPTCSCIFKN. A helical membrane pass occupies residues 280 to 300; the sequence is FNLFLTLIICNAIIDPLIYAF. Residues 301–317 lie on the Cytoplasmic side of the membrane; it reads RSQELRRTLKKVLLCSW. Cys-315 carries S-palmitoyl cysteine lipidation.

It belongs to the G-protein coupled receptor 1 family. In terms of assembly, interacts with MGRN1, but does not undergo MGRN1-mediated ubiquitination; this interaction competes with GNAS-binding and thus inhibits agonist-induced cAMP production. Interacts with OPN3; the interaction results in a decrease in MC1R-mediated cAMP signaling and ultimately a decrease in melanin production in melanocytes.

The protein resides in the cell membrane. Receptor for MSH (alpha, beta and gamma) and ACTH. The activity of this receptor is mediated by G proteins which activate adenylate cyclase. Mediates melanogenesis, the production of eumelanin (black/brown) and phaeomelanin (red/yellow), via regulation of cAMP signaling in melanocytes. This is Melanocyte-stimulating hormone receptor (MC1R) from Trachypithecus francoisi (Francois' leaf monkey).